We begin with the raw amino-acid sequence, 594 residues long: Glomulin (594 aa).

Alanine 2 carries the post-translational modification N-acetylalanine. An alpha-helical region with structural similarity to HEAT repeats region spans residues 2–553 (AVEELQSIIK…EEIPNMPPEM (552 aa)). The tract at residues 300-594 (IDQLPMVLSP…STSEENIGIK (295 aa)) is important for interaction with RBX1.

Interacts with FKBP4 and FKBP1A. Isoform 1: Interacts with RBX1 (via RING domain). Identified in complexes that contain RBX1 plus one of the cullins CUL1, CUL2, CUL3, and CUL4A. Identified in a SCF complex composed of CUL1, RBX1, SKP1, FBXW7 and GLMN. Component of a SCF-like complex consisting of CUL7, RBX1, SKP1, FBXW8 and GLMN. Interacts with unphosphorylated MET and is released upon MET phosphorylation. In terms of processing, phosphorylated on tyrosine residues. In terms of tissue distribution, ubiquitous.

Its function is as follows. Regulatory component of cullin-RING-based SCF (SKP1-Cullin-F-box protein) E3 ubiquitin-protein ligase complexes. Inhibits E3 ubiquitin ligase activity by binding to RBX1 (via RING domain) and inhibiting its interaction with the E2 ubiquitin-conjugating enzyme CDC34. Inhibits RBX1-mediated neddylation of CUL1. Required for normal stability and normal cellular levels of key components of SCF ubiquitin ligase complexes, including FBXW7, RBX1, CUL1, CUL2, CUL3, CUL4A, and thereby contributes to the regulation of CCNE1 and MYC levels. Essential for normal development of the vasculature. Contributes to the regulation of RPS6KB1 phosphorylation. The sequence is that of Glomulin (GLMN) from Homo sapiens (Human).